The following is a 90-amino-acid chain: Protein P18 (90 aa).

The next 3 membrane-spanning stretches (helical) occupy residues 1-21, 37-57, and 60-80; these read MPFGLIVIGIILAIAAYRDTL, GFGYWVLAAVILGFAASIKPI, and PVNAFMILLMIVLLIRKRGAI.

Its subcellular location is the virion membrane. Functionally, component of the phage injection machinery. Required for DNA injection in the membrane transformation event. Involved in the formation of the membrane tail tube to connect the virus interior with the host cytosol. Essential for viral infectivity. The protein is Protein P18 (XVIII) of Acinetobacter calcoaceticus (Arthrobacter siderocapsulatus).